A 752-amino-acid polypeptide reads, in one-letter code: DNA ligase (752 aa).

NAD(+) is bound by residues 48–52 (DADYD), 97–98 (SL), and Glu-131. Residue Lys-133 is the N6-AMP-lysine intermediate of the active site. Positions 154, 189, 305, and 329 each coordinate NAD(+). Zn(2+) contacts are provided by Cys-434, Cys-437, Cys-452, and Cys-458. A compositionally biased stretch (basic and acidic residues) spans 599–615 (ADEGRRASLQPQRDKAW). The disordered stretch occupies residues 599-618 (ADEGRRASLQPQRDKAWADT). In terms of domain architecture, BRCT spans 673–752 (ATQSAVAGLT…EQWLDRIGDA (80 aa)).

Belongs to the NAD-dependent DNA ligase family. LigA subfamily. Requires Mg(2+) as cofactor. Mn(2+) is required as a cofactor.

It carries out the reaction NAD(+) + (deoxyribonucleotide)n-3'-hydroxyl + 5'-phospho-(deoxyribonucleotide)m = (deoxyribonucleotide)n+m + AMP + beta-nicotinamide D-nucleotide.. In terms of biological role, DNA ligase that catalyzes the formation of phosphodiester linkages between 5'-phosphoryl and 3'-hydroxyl groups in double-stranded DNA using NAD as a coenzyme and as the energy source for the reaction. It is essential for DNA replication and repair of damaged DNA. The chain is DNA ligase from Jannaschia sp. (strain CCS1).